A 142-amino-acid chain; its full sequence is MSYLLPHLHSGWAVDQSILAEEERLVVIRFGHDWDETCMQMDEVLASVAETIKNFAVIYLVDITEVPDFNTMYELYDPSTVMFFFRNKHIMIDLGTGNNNKINWALKDKQEFIDIIETVYRGARKGRGLVIAPKDYSTKYRY.

The protein belongs to the DIM1 family. Expressed in roots, leaves, stems, cauline leaves and flowers.

The polypeptide is Thioredoxin-like protein YLS8 (YLS8) (Arabidopsis thaliana (Mouse-ear cress)).